The chain runs to 184 residues: GTP cyclohydrolase 1 (184 aa).

The Zn(2+) site is built by Cys75, His78, and Cys146.

Belongs to the GTP cyclohydrolase I family. Toroid-shaped homodecamer, composed of two pentamers of five dimers.

It carries out the reaction GTP + H2O = 7,8-dihydroneopterin 3'-triphosphate + formate + H(+). It functions in the pathway cofactor biosynthesis; 7,8-dihydroneopterin triphosphate biosynthesis; 7,8-dihydroneopterin triphosphate from GTP: step 1/1. The protein is GTP cyclohydrolase 1 of Streptococcus sanguinis (strain SK36).